A 255-amino-acid polypeptide reads, in one-letter code: uncharacterized protein (255 aa).

One can recognise an HTH deoR-type domain in the interval 3 to 58; sequence PVERRQIILEMVAEKGIVSIAELTDRMNVSHMTIRRDLQKLEQQGAVVLVSGGVQS. A DNA-binding region (H-T-H motif) is located at residues 20 to 39; it reads VSIAELTDRMNVSHMTIRRD.

This is an uncharacterized protein from Escherichia coli (strain K12).